We begin with the raw amino-acid sequence, 243 residues long: Transmembrane protein 174 (243 aa).

2 helical membrane-spanning segments follow: residues 40-60 (LLFS…MGWI) and 73-93 (LLGP…VCKF).

Interacts with SLC34A1; regulates SLC34A1 internalization by PTH and FGF23. In terms of tissue distribution, predominantly expressed in kidney. Selectively localized in the apical membrane of renal proximal tubule epithelial cells.

Its subcellular location is the endoplasmic reticulum membrane. It is found in the apical cell membrane. In terms of biological role, regulator of plasma phosphate homeostasis. Decreases serum inorganic phosphate (Pi) uptake by regulating the sodium-phosphate cotransporter SLC34A1 trafficking by PTH and FGF23 in the kidney. The chain is Transmembrane protein 174 (TMEM174) from Homo sapiens (Human).